Here is a 454-residue protein sequence, read N- to C-terminus: UPF0210 protein Blon_2054/BLIJ_2131 (454 aa).

This sequence belongs to the UPF0210 family. In terms of assembly, homodimer.

This is UPF0210 protein Blon_2054/BLIJ_2131 from Bifidobacterium longum subsp. infantis (strain ATCC 15697 / DSM 20088 / JCM 1222 / NCTC 11817 / S12).